Consider the following 705-residue polypeptide: Probable cyclic nucleotide-gated ion channel 16 (705 aa).

Residues 1-57 (MSNLHLYTSARFRNFPTTFSLRHHHNDPNNQRRRSIFSKLRDKTLDPGGDLITRWNH) are Cytoplasmic-facing. Residues 58-78 (IFLITCLLALFLDPLYFYLPI) traverse the membrane as a helical segment. Residues 79 to 91 (VQAGTACMSIDVR) lie on the Extracellular side of the membrane. Residues 92 to 112 (FGIFVTCFRNLADLSFLIHIL) form a helical membrane-spanning segment. Residues 113–147 (LKFKTAFVSKSSRVFGRGELVMDRREIAIRYLKSE) are Cytoplasmic-facing. The helical transmembrane segment at 148–168 (FVIDLAATLPLPQIMIWFVIP) threads the bilayer. Topologically, residues 169–180 (NAGEFRYAAHQN) are extracellular. The helical transmembrane segment at 181–201 (HTLSLIVLIQYVPRFLVMLPL) threads the bilayer. Topologically, residues 202-222 (NRRIIKATGVAAKTAWSGAAY) are cytoplasmic. The helical transmembrane segment at 223–243 (NLILYLLVSHVLGSVWYVLSI) threads the bilayer. The Extracellular portion of the chain corresponds to 244–353 (QRQHECWRRE…LAASTLSSET (110 aa)). A helical transmembrane segment spans residues 354 to 374 (IFSCFICVAGLVFFSHLIGNV). Residues 375–705 (QNYLQSTTAR…MFKPEDPGFF (331 aa)) are Cytoplasmic-facing. A nucleoside 3',5'-cyclic phosphate is bound by residues 457 to 580 (FFAQ…HSKK) and Glu528. The tract at residues 573-588 (FRRLHSKKLQHAFRYY) is calmodulin-binding. The IQ domain maps to 593 to 622 (RAWGTCFIQAAWRRYMKRKLAMELARQEEE). Disordered regions lie at residues 636–655 (EEDMPESNNNNGDENSSNNQ) and 672–705 (RGVLGNQRGSTRIDPDHPTLKMPKMFKPEDPGFF). The segment covering 642 to 655 (SNNNNGDENSSNNQ) has biased composition (low complexity).

It belongs to the cyclic nucleotide-gated cation channel (TC 1.A.1.5) family. As to quaternary structure, homotetramer or heterotetramer.

Its subcellular location is the cell membrane. Putative cyclic nucleotide-gated ion channel. The polypeptide is Probable cyclic nucleotide-gated ion channel 16 (CNGC16) (Arabidopsis thaliana (Mouse-ear cress)).